The chain runs to 835 residues: MKVLALRHSVAQVYADTQVYTHDDTKDSYENAFLISNLTTHNILYFNYSVKTLEILNKSGIAAIEIQSLEELFTLIRCNFTYDYENNVVYLHDYSYYTNNEIRTDQHWITKTNIEEYLLPGWKLTYVGYNGNDTRGHYNFSFTCQNAATDDDIIIEYIYSEALDFQNFMLKKIKERMTTSLPIARLSNRVFRDKLFPLLVKKHKRVINVGPRNESMFTFLNFPSIRQFSNGPYLVKNTIKLKQERWLGKRVSQFDIGQYKNMMNVITTIYHYYNLYQEKPIIYMVGSAPSYWIYDVRQYSEFLFETWDPLDTPYSSIHHKELFFEKDIGKLKDNSILYIDIRTDRGNVDWKEWRKIVELQTINNLDLAYKYLATGKSKVCCVKLTAMDLELPVSAKLLHHPTTEIRSEFYLLLDIWDVNNVKRFIPKGVLYSFINNVITDNVFIQSPFKIRTSMSDYIVALYALSNDFNNRADIINLINNQKQSLITVRINNTFKDEPKVGFKNIYDWTFLPTDFDTTNAIVTSYDGCLGMFGLSISLASKPTGNNHLFILNGTDKYYKLDQFANHTGISRRSHQIRFSESATSYSGYIFRDLSNNNFNLIGTNVENSVSGHVYNALIYYRYNYSFDLKRWIYLHSIEKVDIEGGKYYEHAPIELIYACRSAKEFALLQDDLTVLRYANEIENYINKVYSITYADDPNYFIGIKFDNIPYTYDVKVPHLTFGVLYISDNMIPDVVKIMKSMKQELFGMDVTTSYTYMLSDGIYVANVSGVLATYFKMYNLFYKNQITFGQSRMFIPHITLSFRNNKTVRIETTKLRIKSIYLRKIRGDTMFDMSE.

Residues 171–245 (KKIKERMTTS…KNTIKLKQER (75 aa)) are N7-methyltransferase activity. A 2'-O-methyltransferase activity region spans residues 246 to 428 (WLGKRVSQFD…NNVKRFIPKG (183 aa)). Residues 429 to 555 (VLYSFINNVI…NHLFILNGTD (127 aa)) form an N7-methyltransferase activity region. Positions 556–692 (KYYKLDQFAN…NYINKVYSIT (137 aa)) are GTase/RTPase activity. The segment at 693 to 835 (YADDPNYFIG…RGDTMFDMSE (143 aa)) is 2'-5'-phosphodiesterase activity. Catalysis depends on for 2'-5'-phosphodiesterase activity residues His-718, Thr-720, His-797, and Thr-799.

It belongs to the rotavirus VP3 family. Interacts with VP1. Interacts with VP2.

The protein resides in the virion. The enzyme catalyses a 5'-end diphospho-ribonucleoside in mRNA + GTP + H(+) = a 5'-end (5'-triphosphoguanosine)-ribonucleoside in mRNA + diphosphate. It carries out the reaction a 5'-end (5'-triphosphoguanosine)-ribonucleoside in mRNA + S-adenosyl-L-methionine = a 5'-end (N(7)-methyl 5'-triphosphoguanosine)-ribonucleoside in mRNA + S-adenosyl-L-homocysteine. It catalyses the reaction 5'-triphosphoadenylyl-(2'-&gt;5')-adenylyl-(2'-&gt;5')-adenosine + 2 H2O = 2 AMP + ATP + 2 H(+). Its function is as follows. Multifunctional enzyme involved in mRNA capping. Catalyzes the formation of the 5' cap structure on the viral plus-strand transcripts. Specifically binds to GTP and displays guanylyltransferase and methyltransferase activities. Has affinity for ssRNA but not for dsRNA. Capping activity is non-specific and caps RNAs that initiate with either a G or an A residue. Together with VP1 polymerase, forms a VP1-VP3 complex positioned near the channels situated at each of the five-fold vertices of the core. Following infection, the outermost layer of the virus is lost, leaving a double-layered particle (DLP) made up of the core and VP6 shell. VP1 then catalyzes the transcription of fully conservative plus-strand genomic RNAs that are capped by VP3 and extruded through the DLP's channels into the cytoplasm where they function as mRNAs for translation of viral proteins. DLPs probably have an RNA triphosphatase activity as well, whereas open cores do not. Functionally, counteracts the host innate immune response thanks to its phosphodiesterase that degrades the 5'-triphosphorylated, 2'-5' linked adenylate oligomers produced by the host cell IFN-inducible 2',5'-oligoadenylate synthetase (OAS). The host RNaseL is therefore not activated. In Homo sapiens (Human), this protein is Protein VP3.